The primary structure comprises 667 residues: NADPH--cytochrome P450 reductase (667 aa).

The Lumenal segment spans residues 1-8 (MEILESID). Residues 9-29 (FIEVLILDNLGAIIIVAVIVG) traverse the membrane as a helical segment. At 30 to 667 (TYLYMNKPPP…HGRYLQDVWF (638 aa)) the chain is on the cytoplasmic side. Residues 72-215 (MKIFFGTQTR…DFNRWKKDMW (144 aa)) form the Flavodoxin-like domain. Residues 164–173 (LGNKTYEHYN) and Asp-199 each bind FMN. The region spanning 277–511 (KNPYYAEVLE…FVRESHFKLP (235 aa)) is the FAD-binding FR-type domain. An NADP(+)-binding site is contributed by Arg-297. FAD-binding positions include 468–470 (TSV) and 484–487 (GVAS). NADP(+) contacts are provided by residues Thr-527, 586-587 (SR), and 592-596 (KVYVQ). FAD is bound at residue Trp-666.

The protein belongs to the NADPH--cytochrome P450 reductase family. It in the N-terminal section; belongs to the flavodoxin family. This sequence in the C-terminal section; belongs to the flavoprotein pyridine nucleotide cytochrome reductase family. The cofactor is FAD. FMN is required as a cofactor.

It is found in the endoplasmic reticulum membrane. The catalysed reaction is 2 oxidized [cytochrome P450] + NADPH = 2 reduced [cytochrome P450] + NADP(+) + H(+). Functionally, this enzyme is required for electron transfer from NADP to cytochrome P450 in microsomes. It can also provide electron transfer to heme oxygenase and cytochrome B5. This chain is NADPH--cytochrome P450 reductase (redB), found in Dictyostelium discoideum (Social amoeba).